The chain runs to 192 residues: Ras-like GTP-binding protein O-RHO (192 aa).

Residue 12-19 participates in GTP binding; that stretch reads GDGACGKT. The short motif at 34–42 is the Effector region element; it reads YVPTVFENY. GTP-binding positions include 59 to 63 and 117 to 120; these read DTAGQ and NKKT. Cys189 is modified (cysteine methyl ester). Residue Cys189 is the site of S-geranylgeranyl cysteine attachment. Residues 190-192 constitute a propeptide, removed in mature form; sequence LLL.

The protein belongs to the small GTPase superfamily. Rho family.

It is found in the cell membrane. This Diplobatis ommata (Ocellated electric ray) protein is Ras-like GTP-binding protein O-RHO.